The following is a 317-amino-acid chain: Transaldolase (317 aa).

The Schiff-base intermediate with substrate role is filled by lysine 126.

Belongs to the transaldolase family. Type 1 subfamily. In terms of assembly, homodimer.

It is found in the cytoplasm. The catalysed reaction is D-sedoheptulose 7-phosphate + D-glyceraldehyde 3-phosphate = D-erythrose 4-phosphate + beta-D-fructose 6-phosphate. Its pathway is carbohydrate degradation; pentose phosphate pathway; D-glyceraldehyde 3-phosphate and beta-D-fructose 6-phosphate from D-ribose 5-phosphate and D-xylulose 5-phosphate (non-oxidative stage): step 2/3. Functionally, transaldolase is important for the balance of metabolites in the pentose-phosphate pathway. The polypeptide is Transaldolase (Burkholderia thailandensis (strain ATCC 700388 / DSM 13276 / CCUG 48851 / CIP 106301 / E264)).